The following is a 585-amino-acid chain: Arginine--tRNA ligase (585 aa).

Residues 131 to 141 (ANPTGPMHVGH) carry the 'HIGH' region motif.

It belongs to the class-I aminoacyl-tRNA synthetase family. In terms of assembly, monomer.

It localises to the cytoplasm. It carries out the reaction tRNA(Arg) + L-arginine + ATP = L-arginyl-tRNA(Arg) + AMP + diphosphate. The protein is Arginine--tRNA ligase of Bartonella quintana (strain Toulouse) (Rochalimaea quintana).